The sequence spans 204 residues: Guanylate kinase (204 aa).

Positions 5–184 (GLLLVLSGPS…AVDHIKSIVE (180 aa)) constitute a Guanylate kinase-like domain. 12 to 19 (GPSGVGKG) serves as a coordination point for ATP.

This sequence belongs to the guanylate kinase family.

Its subcellular location is the cytoplasm. The catalysed reaction is GMP + ATP = GDP + ADP. Its function is as follows. Essential for recycling GMP and indirectly, cGMP. The sequence is that of Guanylate kinase from Lactobacillus johnsonii (strain CNCM I-12250 / La1 / NCC 533).